Here is a 1230-residue protein sequence, read N- to C-terminus: DNA-directed RNA polymerase, mitochondrial (1230 aa).

The transit peptide at 1-41 (MSALCWGRGAAGLKRALRPCGRPGLPGKEGTAGGVCGPRRS) directs the protein to the mitochondrion. Disordered stretches follow at residues 18–55 (RPCGRPGLPGKEGTAGGVCGPRRSSSASPQEQDQDRRK), 95–115 (GSGDGSLQPPRKVQMGAKDAT), and 731–750 (VPAPPSEAPQPPEAHLPHSA). Positions 732–744 (PAPPSEAPQPPEA) are enriched in pro residues. Positions 802–1230 (FRGRTYPCPP…QVKRSTYFFS (429 aa)) are mediates interaction with TEFM. Active-site residues include aspartate 922, lysine 991, and aspartate 1151.

The protein belongs to the phage and mitochondrial RNA polymerase family. Homodimer. Component of the mitochondrial transcription initiation complex, composed at least of TFB2M, TFAM and POLRMT. In this complex TFAM recruits POLRMT to the promoter whereas TFB2M induces structural changes in POLRMT to enable promoter opening and trapping of the DNA non-template strand. Upon metabolic stress, forms a complex composed of FOXO3, SIRT3 and mitochondrial RNA polymerase POLRMT; the complex is recruited to mtDNA in a SIRT3-dependent manner. Also forms a complex composed of FOXO3, SIRT3, TFAM and POLRMT. Interacts with TFB1M and TFB2M, leading to the stimulation of transcription. Interacts with TEFM. Interacts with MTRES1.

The protein resides in the mitochondrion. It carries out the reaction RNA(n) + a ribonucleoside 5'-triphosphate = RNA(n+1) + diphosphate. DNA-dependent RNA polymerase catalyzes the transcription of mitochondrial DNA into RNA using the four ribonucleoside triphosphates as substrates. Component of the mitochondrial transcription initiation complex, composed at least of TFB2M, TFAM and POLRMT that is required for basal transcription of mitochondrial DNA. In this complex, TFAM recruits POLRMT to a specific promoter whereas TFB2M induces structural changes in POLRMT to enable promoter opening and trapping of the DNA non-template strand. Has DNA primase activity. Catalyzes the synthesis of short RNA primers that are necessary for the initiation of lagging-strand DNA synthesis from the origin of light-strand DNA replication (OriL). The polypeptide is DNA-directed RNA polymerase, mitochondrial (Homo sapiens (Human)).